The following is a 132-amino-acid chain: UPF0719 inner membrane protein YjfL (132 aa).

At 1-6 (MHILDS) the chain is on the periplasmic side. The chain crosses the membrane as a helical span at residues 7-27 (LLAFSAYFFIGVAMVIIFLFI). Over 28–46 (YSKITPHNEWQLIKNNNTA) the chain is Cytoplasmic. Residues 47–67 (ASLAFSGTLLGYVIPLSSAAI) form a helical membrane-spanning segment. Over 68-71 (NAVS) the chain is Periplasmic. Residues 72-92 (IPDYFAWGGIALVIQLLVFAG) form a helical membrane-spanning segment. At 93-109 (VRLYMPALSEKIINHNT) the chain is on the cytoplasmic side. Residues 110–130 (AAGMFMGTAALAGGIFNAACM) form a helical membrane-spanning segment. Over 131 to 132 (TW) the chain is Periplasmic.

It belongs to the UPF0719 family.

The protein resides in the cell inner membrane. This is UPF0719 inner membrane protein YjfL (yjfL) from Escherichia coli O157:H7.